The chain runs to 432 residues: Calcium uptake protein 2, mitochondrial (432 aa).

The transit peptide at 1–22 (MAAAAGRSAWLAAWGGRLRRGL) directs the protein to the mitochondrion. Residues 169–204 (KPHSGFHVAFKMLDVDGNEMIERKEFVKLQKIISKQ) form the EF-hand 1 domain. Residues D182, D184, N186, M188, E190, and E193 each coordinate Ca(2+). S202 is subject to Phosphoserine. In terms of domain architecture, EF-hand 2; degenerate spans 224-259 (EPGVNTTLQVRFFGKRGEKKLHYKEFRRFMENLQTE). The EF-hand 3; degenerate domain occupies 290–325 (TENKDIYWRNVREKLSVGESISLDEFKSFCHFTTHL). The EF-hand 4 domain occupies 359-394 (LSDNLLDTVFKIFDLDGDECLSHGEFLGVLKNRMHR). The Ca(2+) site is built by D372, D374, D376, C378, and E383.

This sequence belongs to the MICU1 family. MICU2 subfamily. As to quaternary structure, heterodimer; disulfide-linked; heterodimerizes with MICU1. Component of the uniplex complex, composed of MCU, EMRE/SMDT1, MICU1 and MICU2 in a 4:4:1:1 stoichiometry. Predominantly expressed in stomach, intestine, skeletal muscle, kidney, heart, testis, prostate and uterus.

Its subcellular location is the mitochondrion intermembrane space. It localises to the mitochondrion inner membrane. Functionally, calcium sensor of the mitochondrial calcium uniporter (MCU) channel, which senses calcium level via its EF-hand domains. MICU1 and MICU2 form a disulfide-linked heterodimer that stimulates and inhibits MCU activity, depending on the concentration of calcium. At low calcium levels, MICU1 occludes the pore of the MCU channel, preventing mitochondrial calcium uptake. At higher calcium levels, calcium-binding to MICU1 and MICU2 induces a conformational change that weakens MCU-MICU1 interactions and moves the MICU1-MICU2 heterodimer away from the pore, allowing calcium permeation through the MCU channel. The protein is Calcium uptake protein 2, mitochondrial of Mus musculus (Mouse).